The chain runs to 237 residues: Survival of motor neuron-related-splicing factor 30 (237 aa).

The segment covering 52–69 (SQPAEGTTSTKSSETVAP) has biased composition (polar residues). Disordered stretches follow at residues 52-73 (SQPA…SHSW) and 149-198 (REYK…RSIF). The Tudor domain maps to 72-132 (SWRVGDHCMA…KKVEEGRIRD (61 aa)). The Nuclear localization signal signature appears at 142 to 160 (KELQAEQREYKKKKAQKKV). Positions 151–161 (YKKKKAQKKVQ) are enriched in basic residues. Over residues 162–175 (RMKELEQEREDQKS) the composition is skewed to basic and acidic residues. Polar residues predominate over residues 176–185 (KWQQFNNKAY).

It belongs to the SMN family. In terms of assembly, associates with spliceosomes.

It is found in the nucleus speckle. Its subcellular location is the nucleus. It localises to the cajal body. Its function is as follows. Involved in spliceosome assembly. This is Survival of motor neuron-related-splicing factor 30 (smndc1) from Danio rerio (Zebrafish).